A 370-amino-acid chain; its full sequence is MQNKTVFVGISGGVDSAVSALLLKQQYREVIGIFMECWDNTLNNDQLGHRAFNEHKSGCSSKEDFREAQAIAQLLGIKLIKQNLVEPYWKQVFLPTIDAFKNGLTPNPDMLCNRLIKFGLMRDYCKQLDPNSDFATGHYAALSWDNNQPLLAIPKDKHKDQTYFLAHVKPAQLQDVVFPLAHLLKTEVRQIALAHHFSVATKKDSTGICFIGERHFSDFLKNYLPVKPGVIYDWKTQRQLGSHEGVWFYTTGQRSGLNLGGQAARNFVVEKDLKTNTLYVSSDPEDLQRRGITLSHFNWLYQPNPLTQTVLVRIRHAQPLVQGHITVQPNNVVQVQLDQPIDRVTNGQYGVLYTQNGICLGSGIITASQI.

Residues 9 to 16 (GISGGVDS) and M35 contribute to the ATP site. An interaction with target base in tRNA region spans residues 107 to 109 (NPD). The active-site Nucleophile is the C112. Cysteines 112 and 209 form a disulfide. ATP is bound at residue G137. The segment at 159–161 (KDQ) is interaction with tRNA. Catalysis depends on C209, which acts as the Cysteine persulfide intermediate.

The protein belongs to the MnmA/TRMU family.

Its subcellular location is the cytoplasm. It catalyses the reaction S-sulfanyl-L-cysteinyl-[protein] + uridine(34) in tRNA + AH2 + ATP = 2-thiouridine(34) in tRNA + L-cysteinyl-[protein] + A + AMP + diphosphate + H(+). Catalyzes the 2-thiolation of uridine at the wobble position (U34) of tRNA, leading to the formation of s(2)U34. This is tRNA-specific 2-thiouridylase MnmA from Mycoplasma pneumoniae (strain ATCC 29342 / M129 / Subtype 1) (Mycoplasmoides pneumoniae).